Here is a 247-residue protein sequence, read N- to C-terminus: MPGRSSTSSGSTRYISFSGIESALSSLKNFQSCISSGMDTVSSVALDLVETQTEVSSEYSMDKAMVEFAKMDRELSHYVKAVQSTINHVKEERPEKVPDLKLLVEKKFLALQDKNSDADFKENEKFVQFKQQLRELKKQYGIHADRENDLTEGVDEDMIVTQSQTNFICPITQLEMKKPVKNKMCGHTYEEEAIVRMIESKHKRKKKACCPKIGCSHTDMRMSDLIPDEALRRAIESHNKKKKRHSE.

Met-1 bears the N-acetylmethionine mark. Residues Lys-90 and Lys-107 each participate in a glycyl lysine isopeptide (Lys-Gly) (interchain with G-Cter in SUMO2) cross-link. At Ser-116 the chain carries Phosphoserine. Residues Lys-125 and Lys-130 each participate in a glycyl lysine isopeptide (Lys-Gly) (interchain with G-Cter in SUMO2) cross-link. Residues 154–240 (VDEDMIVTQS…LRRAIESHNK (87 aa)) form an SP-RING-type zinc finger. Zn(2+) is bound by residues Cys-185, His-187, Cys-210, and Cys-215.

Belongs to the NSE2 family. As to quaternary structure, component of the SMC5-SMC6 complex which consists at least of SMC5, SMC6, NSMCE2, NSMCE1, NSMCE4A or EID3 and NSMCE3. Sumoylated, possibly via autosumoylation.

It localises to the nucleus. Its subcellular location is the chromosome. It is found in the telomere. The protein resides in the PML body. It functions in the pathway protein modification; protein sumoylation. Functionally, E3 SUMO-protein ligase component of the SMC5-SMC6 complex, a complex involved in DNA double-strand break repair by homologous recombination. Is not be required for the stability of the complex. The complex may promote sister chromatid homologous recombination by recruiting the SMC1-SMC3 cohesin complex to double-strand breaks. Acts as an E3 ligase mediating SUMO attachment to various proteins such as SMC6L1 and TSNAX, the shelterin complex subunits TERF1, TERF2, TINF2 and TERF2IP, RAD51AP1, and maybe the cohesin components RAD21 and STAG2. Required for recruitment of telomeres to PML nuclear bodies. Required for sister chromatid cohesion during prometaphase and mitotic progression. In Mus musculus (Mouse), this protein is E3 SUMO-protein ligase NSE2 (Nsmce2).